A 510-amino-acid chain; its full sequence is Bifunctional purine biosynthesis protein PurH (510 aa).

An MGS-like domain is found at 1–142 (MRALLSVSDK…KNYKDVMVLC (142 aa)).

Belongs to the PurH family.

It carries out the reaction (6R)-10-formyltetrahydrofolate + 5-amino-1-(5-phospho-beta-D-ribosyl)imidazole-4-carboxamide = 5-formamido-1-(5-phospho-D-ribosyl)imidazole-4-carboxamide + (6S)-5,6,7,8-tetrahydrofolate. The catalysed reaction is IMP + H2O = 5-formamido-1-(5-phospho-D-ribosyl)imidazole-4-carboxamide. It functions in the pathway purine metabolism; IMP biosynthesis via de novo pathway; 5-formamido-1-(5-phospho-D-ribosyl)imidazole-4-carboxamide from 5-amino-1-(5-phospho-D-ribosyl)imidazole-4-carboxamide (10-formyl THF route): step 1/1. It participates in purine metabolism; IMP biosynthesis via de novo pathway; IMP from 5-formamido-1-(5-phospho-D-ribosyl)imidazole-4-carboxamide: step 1/1. The chain is Bifunctional purine biosynthesis protein PurH from Campylobacter jejuni subsp. doylei (strain ATCC BAA-1458 / RM4099 / 269.97).